The following is a 268-amino-acid chain: 14-3-3-like protein GF14 iota (268 aa).

Phosphoserine is present on residues S70 and S193. T214 carries the post-translational modification Phosphothreonine. The disordered stretch occupies residues D240–N268. Residues D248 to K261 are compositionally biased toward basic and acidic residues.

Belongs to the 14-3-3 family. Expressed in flowers.

The protein resides in the nucleus. Its subcellular location is the cytoplasm. Its function is as follows. Is associated with a DNA binding complex that binds to the G box, a well-characterized cis-acting DNA regulatory element found in plant genes. This chain is 14-3-3-like protein GF14 iota, found in Arabidopsis thaliana (Mouse-ear cress).